A 109-amino-acid polypeptide reads, in one-letter code: Nucleoid-associated protein VIBHAR_03086 (109 aa).

Disordered stretches follow at residues 1–21 (MFGK…QDRM) and 88–109 (QKEK…KMPF).

This sequence belongs to the YbaB/EbfC family. In terms of assembly, homodimer.

The protein resides in the cytoplasm. Its subcellular location is the nucleoid. Binds to DNA and alters its conformation. May be involved in regulation of gene expression, nucleoid organization and DNA protection. The protein is Nucleoid-associated protein VIBHAR_03086 of Vibrio campbellii (strain ATCC BAA-1116).